Here is a 567-residue protein sequence, read N- to C-terminus: Geraniol synthase, chloroplastic (567 aa).

Residues 1-63 (MSCARITVTL…GDNSQRKNTR (63 aa)) constitute a chloroplast transit peptide. The disordered stretch occupies residues 48 to 75 (STPLINGDNSQRKNTRQHMEESSSKRRE). Residues 64–75 (QHMEESSSKRRE) show a composition bias toward basic and acidic residues. Residues Arg-286, Asp-323, Asp-327, Arg-466, and Asp-469 each coordinate (2E)-geranyl diphosphate. Residues Asp-323 and Asp-327 each coordinate Mn(2+). A DDXXD motif motif is present at residues 323–327 (DDIFD). Mn(2+) is bound by residues Asp-469, Thr-473, and Glu-477.

The protein belongs to the terpene synthase family. Tpsb subfamily. Homodimer. It depends on Mn(2+) as a cofactor. Expressed in the peltate glandular trichomes of the leaves.

It localises to the plastid. Its subcellular location is the chloroplast. The enzyme catalyses (2E)-geranyl diphosphate + H2O = (2E)-geraniol + diphosphate. It participates in secondary metabolite biosynthesis; terpenoid biosynthesis. Monoterpene synthase that catalyzes the formation of geraniol from geranyl diphosphate. This Ocimum basilicum (Sweet basil) protein is Geraniol synthase, chloroplastic (GES).